Here is a 525-residue protein sequence, read N- to C-terminus: MALNIKEISEVIEKQIKNYGKDIIEAEQGSVVTIGDGVSLIYGLDKALMGELLIFPNDVYGMVLSLEEGAVGAVILGDYKLIKEGDIVKRTGKVVETPVGDAMIGRVVNALGQPIDNNGPIKTKKSKPVERIATGVMARKSVSQPLETGILGIDASIPIGKGQRELIIGDRQTGKTAVAIDTIINQKGKNVKCIYVSIGQKDSTIAQVVEKLKKFGAMEYTTVVNAGASDSAPLQYLAPYTGVTIGEEWMENGEDVLIVYDDLSKHAVAYREMSLLLRRPPGREAYPGDVFYLHSRLLERAARVNEKFGGGSITALPIIETQASDISAYIPTNVISITDGQIFLSSDLFMAGIRPAINIGPSVSRVGSSAQIKAVKQVSGTLKLELAQYYELEAFSKFGSDLDESTKATLDHGARIIQMLVQRQYSPLNQIDEAIILFAIKSHLIKWIPLENIRDFKTEIITFFNNEKDAKALKAELTKKLEWNADLESGIQKEIEKLVVKFTSTLKNYNPTIFGDEKEFKKLGK.

Residue 169-176 (GDRQTGKT) coordinates ATP.

This sequence belongs to the ATPase alpha/beta chains family. In terms of assembly, F-type ATPases have 2 components, CF(1) - the catalytic core - and CF(0) - the membrane proton channel. CF(1) has five subunits: alpha(3), beta(3), gamma(1), delta(1), epsilon(1). CF(0) has three main subunits: a(1), b(2) and c(9-12). The alpha and beta chains form an alternating ring which encloses part of the gamma chain. CF(1) is attached to CF(0) by a central stalk formed by the gamma and epsilon chains, while a peripheral stalk is formed by the delta and b chains.

It is found in the cell membrane. It catalyses the reaction ATP + H2O + 4 H(+)(in) = ADP + phosphate + 5 H(+)(out). In terms of biological role, produces ATP from ADP in the presence of a proton gradient across the membrane. The alpha chain is a regulatory subunit. This chain is ATP synthase subunit alpha, found in Mesoplasma florum (strain ATCC 33453 / NBRC 100688 / NCTC 11704 / L1) (Acholeplasma florum).